The following is a 688-amino-acid chain: Translation initiation factor IF-2 (688 aa).

Composition is skewed to basic and acidic residues over residues 53–62 (GKEKSEKTKE) and 86–95 (KRDDKNEKVN). Residues 53–100 (GKEKSEKTKEEDDEIETTAKNPIKESMNNKKSNKRDDKNEKVNTENAE) form a disordered region. The tr-type G domain maps to 187 to 354 (KRSPIITVMG…MILLSSEILE (168 aa)). The segment at 196–203 (GHVDHGKT) is G1. 196–203 (GHVDHGKT) contacts GTP. Positions 221–225 (GITQH) are G2. The G3 stretch occupies residues 242 to 245 (DTPG). GTP is bound by residues 242–246 (DTPGH) and 296–299 (NKID). The segment at 296 to 299 (NKID) is G4. Positions 332–334 (SAH) are G5.

It belongs to the TRAFAC class translation factor GTPase superfamily. Classic translation factor GTPase family. IF-2 subfamily.

It is found in the cytoplasm. Functionally, one of the essential components for the initiation of protein synthesis. Protects formylmethionyl-tRNA from spontaneous hydrolysis and promotes its binding to the 30S ribosomal subunits. Also involved in the hydrolysis of GTP during the formation of the 70S ribosomal complex. This Clostridium botulinum (strain Loch Maree / Type A3) protein is Translation initiation factor IF-2.